Here is a 96-residue protein sequence, read N- to C-terminus: Small ribosomal subunit protein bS6 (96 aa).

This sequence belongs to the bacterial ribosomal protein bS6 family.

Its function is as follows. Binds together with bS18 to 16S ribosomal RNA. In Streptococcus sanguinis (strain SK36), this protein is Small ribosomal subunit protein bS6.